The primary structure comprises 367 residues: Alanine racemase (367 aa).

The active-site Proton acceptor; specific for D-alanine is the Lys40. The residue at position 40 (Lys40) is an N6-(pyridoxal phosphate)lysine. Substrate is bound at residue Arg136. Tyr263 acts as the Proton acceptor; specific for L-alanine in catalysis. Position 310 (Met310) interacts with substrate.

It belongs to the alanine racemase family. Requires pyridoxal 5'-phosphate as cofactor.

It carries out the reaction L-alanine = D-alanine. The protein operates within amino-acid biosynthesis; D-alanine biosynthesis; D-alanine from L-alanine: step 1/1. Its function is as follows. Catalyzes the interconversion of L-alanine and D-alanine. May also act on other amino acids. This is Alanine racemase (alr) from Streptococcus thermophilus (strain ATCC BAA-250 / LMG 18311).